The sequence spans 316 residues: L-lactate dehydrogenase (316 aa).

Residues 13–15 (GMI), 34–36 (FDI), Tyr67, and 79–83 (TAGFT) contribute to the NAD(+) site. A substrate-binding site is contributed by Arg95. Residues 125-127 (VTN), Leu150, and Leu154 each bind NAD(+). The substrate site is built by Arg158 and His182. An NAD(+)-binding site is contributed by His182. Residue His182 is the Proton acceptor of the active site.

It belongs to the LDH/MDH superfamily. LDH family. In terms of assembly, homotetramer.

It catalyses the reaction (S)-lactate + NAD(+) = pyruvate + NADH + H(+). The protein operates within fermentation; pyruvate fermentation to lactate; (S)-lactate from pyruvate: step 1/1. The polypeptide is L-lactate dehydrogenase (Plasmodium berghei).